The following is a 292-amino-acid chain: Elongation factor Ts (292 aa).

The interval 80–83 is involved in Mg(2+) ion dislocation from EF-Tu; that stretch reads TDFV.

The protein belongs to the EF-Ts family.

It is found in the cytoplasm. Functionally, associates with the EF-Tu.GDP complex and induces the exchange of GDP to GTP. It remains bound to the aminoacyl-tRNA.EF-Tu.GTP complex up to the GTP hydrolysis stage on the ribosome. In Tolumonas auensis (strain DSM 9187 / NBRC 110442 / TA 4), this protein is Elongation factor Ts.